We begin with the raw amino-acid sequence, 456 residues long: Protein trichome birefringence-like 25 (456 aa).

A helical; Signal-anchor for type II membrane protein membrane pass occupies residues 26–42 (QIFLKSVAFFLLIGLAY). Residues 172-174 (GDS) carry the GDS motif motif. The short motif at 426–440 (DCLHWCLPGPIDSWN) is the DCXHWCLPGXXDXWN motif element.

This sequence belongs to the PC-esterase family. TBL subfamily.

It is found in the membrane. Its function is as follows. May be involved in the O-acetylation of mannan. May act as a bridging protein that binds pectin and other cell wall polysaccharides. Probably involved in maintaining esterification of pectins. The protein is Protein trichome birefringence-like 25 (TBL25) of Arabidopsis thaliana (Mouse-ear cress).